A 315-amino-acid polypeptide reads, in one-letter code: Ribose-phosphate pyrophosphokinase (315 aa).

ATP contacts are provided by residues 40–42 and 99–100; these read DGE and RQ. 2 residues coordinate Mg(2+): H133 and D175. Residue K198 is part of the active site. D-ribose 5-phosphate-binding positions include R200, D224, and 228-232; that span reads DTAHS.

Belongs to the ribose-phosphate pyrophosphokinase family. Class I subfamily. In terms of assembly, homohexamer. Mg(2+) serves as cofactor.

Its subcellular location is the cytoplasm. It catalyses the reaction D-ribose 5-phosphate + ATP = 5-phospho-alpha-D-ribose 1-diphosphate + AMP + H(+). Its pathway is metabolic intermediate biosynthesis; 5-phospho-alpha-D-ribose 1-diphosphate biosynthesis; 5-phospho-alpha-D-ribose 1-diphosphate from D-ribose 5-phosphate (route I): step 1/1. Involved in the biosynthesis of the central metabolite phospho-alpha-D-ribosyl-1-pyrophosphate (PRPP) via the transfer of pyrophosphoryl group from ATP to 1-hydroxyl of ribose-5-phosphate (Rib-5-P). In Thermotoga maritima (strain ATCC 43589 / DSM 3109 / JCM 10099 / NBRC 100826 / MSB8), this protein is Ribose-phosphate pyrophosphokinase.